A 547-amino-acid chain; its full sequence is CAP-Gly domain-containing linker protein 3 (547 aa).

The disordered stretch occupies residues 1-49 (MTKTDPAPMAPPPRGEEEEEEEEDEPVPEAPSPTQERRQKPVVHPSAPA). A compositionally biased stretch (acidic residues) spans 16 to 27 (EEEEEEEEDEPV). 3 ANK repeats span residues 117–158 (TDMT…LRSR), 160–191 (TNMN…VVNS), and 197–229 (NHGS…LRNR). The CAP-Gly 1 domain maps to 314–356 (GTTEFASGQWVGVELDEPEGKNDGSVGGVRYFICPPKQGLFAS). A disordered region spans residues 365–413 (DAPPSSVTSTPRTPRMDFSRVTGKGRREHKGKKKTPSSPSLGSLQQRDG). The segment covering 367 to 377 (PPSSVTSTPRT) has biased composition (low complexity). Position 374 is a phosphothreonine (Thr374). Basic residues predominate over residues 387-399 (GKGRREHKGKKKT). Polar residues predominate over residues 400-410 (PSSPSLGSLQQ). Position 401 is a phosphoserine (Ser401). The 43-residue stretch at 436–478 (GKTDFAPGYWYGIELDQPTGKHDGSVFGVRYFTCPPRHGVFAP) folds into the CAP-Gly 2 domain. The tract at residues 488 to 547 (STDSPGDSVGAKKVHQVTMTQPKRTFTTVRTPKDIASENSISRLLFCCWFPWMLRAEMQS) is goLD. 2 S-palmitoyl cysteine lipidation sites follow: Cys534 and Cys535.

As to quaternary structure, homodimer. Interacts with AKT1 and AKT2; when AKT1 and AKT2 are phosphorylated and activated, affinity is higher for AKT2. Interacts with ZDHHC13 (via ANK repeats). Interacts with ZDHHC17 (via ANK repeats). In terms of processing, palmitoylation by ZDHHC17 regulates association with the plasma membrane.

It is found in the cell membrane. The protein resides in the cytoplasm. Its subcellular location is the golgi apparatus. The protein localises to the golgi stack. Its function is as follows. Functions as a cytoplasmic linker protein. Involved in TGN-endosome dynamics. May modulate the cellular compartmentalization of AKT kinase family and promote its cell membrane localization, thereby playing a role in glucose transport in adipocytes. The chain is CAP-Gly domain-containing linker protein 3 (CLIP3) from Homo sapiens (Human).